The chain runs to 89 residues: Small ribosomal subunit protein uS17 (89 aa).

The protein belongs to the universal ribosomal protein uS17 family. In terms of assembly, part of the 30S ribosomal subunit.

In terms of biological role, one of the primary rRNA binding proteins, it binds specifically to the 5'-end of 16S ribosomal RNA. The sequence is that of Small ribosomal subunit protein uS17 from Chlorobium phaeobacteroides (strain BS1).